Consider the following 85-residue polypeptide: Small ribosomal subunit protein uS17 (85 aa).

This sequence belongs to the universal ribosomal protein uS17 family. In terms of assembly, part of the 30S ribosomal subunit.

Functionally, one of the primary rRNA binding proteins, it binds specifically to the 5'-end of 16S ribosomal RNA. This Ruminiclostridium cellulolyticum (strain ATCC 35319 / DSM 5812 / JCM 6584 / H10) (Clostridium cellulolyticum) protein is Small ribosomal subunit protein uS17.